The sequence spans 1485 residues: MIERGKFRSLTLVNWNGFFARTFDLDELVTTLSGGNGAGKSTTMAAFVTALIPDLTLLHFRNTTEAGATSGSRDKGLHGKLRAGVCYSTLDVVNSRHQRVVVGVRLQQVAGRDRKVDIKPFTIQGLPTAIQPTEILTELVAERQARVLSLPELKERVEAMEGVQFKQFNSITDYHSLMFDLGVIPKRLRSSADRSKFYRLIEASLYGGISSAITRSLRDYLLPENSGVRKAFQDMEAALRENRMTLEAIRVTQSDRDLFKHLISEATSYVAADYMRHANERRIHLDSALVLRRDLFSSRKQLVTEQYRHVEMSRELAEQSGAESDLETDYQAASDHLNLVQTAMRQQEKIERYQSDLEELTYRLEEQSEVVSEASEQQADNEARAEAAELEVDELKSQLADYQQALDVQQTRAIQYQQALQALERARALCQLPELTADNAEEWLETFHAKEQEATESLLQLEQKLSVADAAHSQFEQAYQLVVNIAGEVSRSEAWQTARELLRDWPSQQHLAERVQPLRMRLSELEQRLRAQQDAERLLQEFCKRQGNAYQPEELEALQRELESQVEELSLSVSDAGERRMAMRQELEQLKLKIQELTARAPVWLAAQDALSQLSEQSGEALEDSRQVTEYMQQLLERERETTVERDEIAASKRAIEAQIERLSQPSGAEDARLIALAERFGGVLLSEIYDDVTIDDAPYFSALYGPSRHGIVVPDLSLVREHLQGLDDCPEDLYLIEGDPQSFDDSVFAVEEHEKAVVVKIADRQWRYSRYPEVPLFGRAARENRLETLYQERDRLAERYATLSFDVQKTQRTHQAFSRFIGSHLAVAFDADPEAEIRLLNTRRGEIERALNAHEDQNQQQRQQFDQAKEGISALNRLIPLVSLLLDETLADRVEEITEELAEAQEAARYIQQHGVSLTKLEPLLSVLQSDPQQHEQLQESYVLAQNSQRLAKQQAFALTEVVQRRAHFSYTDSAGMLTENSDLNDKLRQRLEQAEAERTRAREQLRQYQSQFTQYSQVLASLKSSYDAKRDMLKELSQELVDIGVPADANAEARARARRDELHAALSTNRSRRNQLEKQLTFCEAEMDSLQKKLRKLERDYHQIREQVVNAKAGWCAVMRMVKDNGVERRLHRRELAYMDGDELRSMSDKALGALRLAVADNEHLRDVLRLSEDPKRPERKIQFYIAVYQHLRERIRQDIIRTDDPVEAIEQMEIELGRLTEELTAREQKLAISSKSVSNIIRKTIHREQNRIRMLNQGLQAVSFGQVKSVRLNVNVREAHATLLDVLSEQQEQHQDLFNSNRLTFSEALAKLYQRLNPQMDMGQRLPQTIGEELLDYRNYLELEVEVYRGADGWLRAESGALSTGEAIGTGMSILVMVVQSWEEESRRLRGKDISPCRLLFLDEAARLDAKSIATLFELCERLEMQLIIAAPENISPEKGTTYKLVRKVFQNHEHVHVVGLRGFANEMPSLPPIAAELQQGG.

34 to 41 is an ATP binding site; the sequence is GGNGAGKS. Coiled-coil stretches lie at residues 337 to 480 and 509 to 605; these read LNLV…QAYQ and QHLA…PVWL. Residues 666–783 are flexible hinge; the sequence is PSGAEDARLI…EVPLFGRAAR (118 aa). 2 coiled-coil regions span residues 835 to 915 and 977 to 1116; these read EAEI…IQQH and GMLT…AKAG.

It belongs to the SMC family. MukB subfamily. As to quaternary structure, homodimerization via its hinge domain. Binds to DNA via its C-terminal region. Interacts, and probably forms a ternary complex, with MukE and MukF via its C-terminal region. The complex formation is stimulated by calcium or magnesium. Interacts with tubulin-related protein FtsZ.

Its subcellular location is the cytoplasm. It localises to the nucleoid. In terms of biological role, plays a central role in chromosome condensation, segregation and cell cycle progression. Functions as a homodimer, which is essential for chromosome partition. Involved in negative DNA supercoiling in vivo, and by this means organize and compact chromosomes. May achieve or facilitate chromosome segregation by condensation DNA from both sides of a centrally located replisome during cell division. This is Chromosome partition protein MukB from Yersinia pseudotuberculosis serotype IB (strain PB1/+).